Consider the following 259-residue polypeptide: 3-deoxy-manno-octulosonate cytidylyltransferase (259 aa).

Belongs to the KdsB family.

It is found in the cytoplasm. The enzyme catalyses 3-deoxy-alpha-D-manno-oct-2-ulosonate + CTP = CMP-3-deoxy-beta-D-manno-octulosonate + diphosphate. It participates in nucleotide-sugar biosynthesis; CMP-3-deoxy-D-manno-octulosonate biosynthesis; CMP-3-deoxy-D-manno-octulosonate from 3-deoxy-D-manno-octulosonate and CTP: step 1/1. The protein operates within bacterial outer membrane biogenesis; lipopolysaccharide biosynthesis. Activates KDO (a required 8-carbon sugar) for incorporation into bacterial lipopolysaccharide in Gram-negative bacteria. The sequence is that of 3-deoxy-manno-octulosonate cytidylyltransferase from Alkalilimnicola ehrlichii (strain ATCC BAA-1101 / DSM 17681 / MLHE-1).